Here is a 361-residue protein sequence, read N- to C-terminus: Biotin synthase (361 aa).

One can recognise a Radical SAM core domain in the interval 47–278; it reads VHGDEVALCG…AAHIFVMGGR (232 aa). [4Fe-4S] cluster contacts are provided by Cys-65, Cys-69, and Cys-72. [2Fe-2S] cluster is bound by residues Ser-110, Cys-143, and Cys-203. The tract at residues 323–361 is disordered; sequence TLRPPDTGKPWAFDGHAPSDADWNRKAAEPRPRPLPVVR. Residues 339-354 show a composition bias toward basic and acidic residues; that stretch reads APSDADWNRKAAEPRP.

It belongs to the radical SAM superfamily. Biotin synthase family. As to quaternary structure, homodimer. The cofactor is [4Fe-4S] cluster. [2Fe-2S] cluster is required as a cofactor.

It catalyses the reaction (4R,5S)-dethiobiotin + (sulfur carrier)-SH + 2 reduced [2Fe-2S]-[ferredoxin] + 2 S-adenosyl-L-methionine = (sulfur carrier)-H + biotin + 2 5'-deoxyadenosine + 2 L-methionine + 2 oxidized [2Fe-2S]-[ferredoxin]. Its pathway is cofactor biosynthesis; biotin biosynthesis; biotin from 7,8-diaminononanoate: step 2/2. Catalyzes the conversion of dethiobiotin (DTB) to biotin by the insertion of a sulfur atom into dethiobiotin via a radical-based mechanism. In Anaeromyxobacter sp. (strain K), this protein is Biotin synthase.